Reading from the N-terminus, the 290-residue chain is 1D-myo-inositol 2-acetamido-2-deoxy-alpha-D-glucopyranoside deacetylase (290 aa).

Residues H17, D20, and H150 each coordinate Zn(2+).

This sequence belongs to the MshB deacetylase family. Requires Zn(2+) as cofactor.

It carries out the reaction 1D-myo-inositol 2-acetamido-2-deoxy-alpha-D-glucopyranoside + H2O = 1D-myo-inositol 2-amino-2-deoxy-alpha-D-glucopyranoside + acetate. Functionally, catalyzes the deacetylation of 1D-myo-inositol 2-acetamido-2-deoxy-alpha-D-glucopyranoside (GlcNAc-Ins) in the mycothiol biosynthesis pathway. In Corynebacterium glutamicum (strain R), this protein is 1D-myo-inositol 2-acetamido-2-deoxy-alpha-D-glucopyranoside deacetylase.